Reading from the N-terminus, the 51-residue chain is Sperm protamine P1 (51 aa).

This sequence belongs to the protamine P1 family. Testis.

It is found in the nucleus. Its subcellular location is the chromosome. In terms of biological role, protamines substitute for histones in the chromatin of sperm during the haploid phase of spermatogenesis. They compact sperm DNA into a highly condensed, stable and inactive complex. In Macaca mulatta (Rhesus macaque), this protein is Sperm protamine P1 (PRM1).